A 156-amino-acid polypeptide reads, in one-letter code: MSRKKSAKVREVLADPIFNSVVVTKLINTIMLDGKKSIAQDILYSAFDLVKEKTKKDPMQVFTQAVENITPQLEIRTRRIGGTNYQVPTEVSKRRKQALSLRWLVQYARLRNDKSMDLRLANEIIDAANKTGGAIKKREDTHKMAEANKAFAHFRW.

The protein belongs to the universal ribosomal protein uS7 family. Part of the 30S ribosomal subunit. Contacts proteins S9 and S11.

One of the primary rRNA binding proteins, it binds directly to 16S rRNA where it nucleates assembly of the head domain of the 30S subunit. Is located at the subunit interface close to the decoding center, probably blocks exit of the E-site tRNA. The sequence is that of Small ribosomal subunit protein uS7 from Mycoplasmopsis synoviae (strain 53) (Mycoplasma synoviae).